Reading from the N-terminus, the 754-residue chain is Bifunctional sesterterpene synthase astC (754 aa).

The N-terminal stretch at 1-24 (MASLEVFVLYLRIFFISFMSRARS) is a signal peptide. Positions 58–388 (IQYRHSKLVD…RYHFHKPEHW (331 aa)) are sesterterpene synthase. Mg(2+) is bound by residues D149 and D153. A geranylfarnesyl diphosphate synthase region spans residues 389–753 (RQVENVDDDG…LRLLLKRLHV (365 aa)). Basic and acidic residues predominate over residues 392–403 (ENVDDDGNKSDD). The interval 392 to 414 (ENVDDDGNKSDDSGIAMKDSPES) is disordered. Mg(2+) is bound by residues D512 and D516.

The protein in the N-terminal section; belongs to the terpene synthase family. It in the C-terminal section; belongs to the FPP/GGPP synthase family. Requires Mg(2+) as cofactor.

It carries out the reaction (2E,6E,10E,14E)-geranylfarnesyl diphosphate = preasperterpenoid A + diphosphate. It functions in the pathway secondary metabolite biosynthesis; terpenoid biosynthesis. Bifunctional sesterterpene synthase; part of the gene cluster that mediates the biosynthesis of the asperterpenoids, sesterterpenes that exhibit anti-tuberculosis activity. The first step of the pathway is performed by the sesterterpene synthase astC that possesses both prenyl transferase and terpene cyclase activity, converting isopentenyl diphosphate and dimethylallyl diphosphate into geranylfarnesyl diphosphate (GFPP) and further converting GFPP into preasperterpenoid A, respectively. The cytochrome P450 monooxygenase astB then dually oxidizes preasperterpenoid A to produce asperterpenoid A along with a minor product, asperterpenoid B. Finally, the cytochrome P450 monooxygenase astA converts asperterpenoid A into asperterpenoid C. The sequence is that of Bifunctional sesterterpene synthase astC from Talaromyces wortmannii (Penicillium wortmannii).